Reading from the N-terminus, the 374-residue chain is Secondary metabolism regulator laeA (374 aa).

The tract at residues 1–75 (MFEMGPVGTR…NRNGSPSMSP (75 aa)) is disordered. The segment covering 23–40 (SYHSPTSSDRGRSRQNSD) has biased composition (polar residues). Met-207 is modified (S-methylmethionine).

The protein belongs to the methyltransferase superfamily. LaeA methyltransferase family. As to quaternary structure, component of the heterotrimeric velvet complex composed of laeA, veA and velB; VeA acting as a bridging protein between laeA and velB. In terms of processing, self-methylates at Met-207.

The protein localises to the nucleus. The enzyme catalyses L-methionyl-[protein] + S-adenosyl-L-methionine = S-methyl-L-methionyl-[protein] + S-adenosyl-L-homocysteine. Methyltransferase that performs automethylation at Met-207. No other methyl-accepting substrate has been identified yet. Component of the velvet transcription factor complex that acts as a global regulator for secondary metabolite gene expression. Controls the expression of the sterigmatocystin, penicillin, and lovastatin gene clusters. Controls light-dependent formation of the velB-vosA complex, veA protein modification, and is required for light-mediated inhibition of sexual development. Within the velvet complex, controls light-dependent secondary metabolism. Involved in the defense response against Drosophila melanogaster larval grazing. The protein is Secondary metabolism regulator laeA of Emericella nidulans (Aspergillus nidulans).